Reading from the N-terminus, the 851-residue chain is Protein FAM13B (851 aa).

In terms of domain architecture, Rho-GAP spans 23–212 (IPLDELQQGG…GLLENYYEFF (190 aa)). Residues 556–565 (IKDAKHKNSD) are compositionally biased toward basic and acidic residues. The interval 556 to 611 (IKDAKHKNSDGEFAPQTRPRSNTLPKSFGSSLDHEDGESEGEPRVIQKEKTPSKEA) is disordered. A compositionally biased stretch (polar residues) spans 573–585 (RPRSNTLPKSFGS). Over residues 596–611 (GEPRVIQKEKTPSKEA) the composition is skewed to basic and acidic residues.

It belongs to the FAM13 family.

The chain is Protein FAM13B (Fam13b) from Mus musculus (Mouse).